The following is a 133-amino-acid chain: Small ribosomal subunit protein bS16 (133 aa).

The interval 99–133 is disordered; sequence EKWQQNQTERRQKRLAVKTRRRQAKKAAEAKGAEA. Residues 109-123 show a composition bias toward basic residues; the sequence is RQKRLAVKTRRRQAK. The span at 124 to 133 shows a compositional bias: basic and acidic residues; sequence KAAEAKGAEA.

The protein belongs to the bacterial ribosomal protein bS16 family.

This Chlorobium limicola (strain DSM 245 / NBRC 103803 / 6330) protein is Small ribosomal subunit protein bS16.